An 89-amino-acid polypeptide reads, in one-letter code: Small ribosomal subunit protein uS15 (89 aa).

Basic and acidic residues predominate over residues 1 to 21 (MALTTEEKKQVLSEYGLHETD). The interval 1 to 24 (MALTTEEKKQVLSEYGLHETDTGS) is disordered.

The protein belongs to the universal ribosomal protein uS15 family. In terms of assembly, part of the 30S ribosomal subunit. Forms a bridge to the 50S subunit in the 70S ribosome, contacting the 23S rRNA.

One of the primary rRNA binding proteins, it binds directly to 16S rRNA where it helps nucleate assembly of the platform of the 30S subunit by binding and bridging several RNA helices of the 16S rRNA. Functionally, forms an intersubunit bridge (bridge B4) with the 23S rRNA of the 50S subunit in the ribosome. This chain is Small ribosomal subunit protein uS15, found in Rhodococcus opacus (strain B4).